The chain runs to 517 residues: Protein IQ-DOMAIN 13 (517 aa).

The segment at 1–11 is calmodulin-binding; that stretch reads MGKKGSWFSAI. Disordered regions lie at residues 1–60 and 81–147; these read MGKK…FLPI and VFRP…PRAV. The span at 40–49 shows a compositional bias: basic residues; the sequence is KKKKGFGKKL. Over residues 89–99 the composition is skewed to polar residues; that stretch reads DRANSSSTSVA. Residues 134–144 are compositionally biased toward pro residues; it reads PKPPSPKPPSP. 2 IQ domains span residues 168–196 and 197–218; these read KNAYAIKIQAAFRGYMARRSFRALKGLVR and LQGVVRGHSVKRQTMNAMKYMQ. Disordered regions lie at residues 324-407 and 425-452; these read QPFR…LTSC and KLRANSNPKERMDRTPVSTNEKRRSSFP. A compositionally biased stretch (low complexity) spans 328–342; sequence LTPTRPSLSPQPQSS. The segment covering 343–367 has biased composition (polar residues); the sequence is NQNHFRLNNSFDTSTPNSSKSTFVT. Positions 432-448 are enriched in basic and acidic residues; the sequence is PKERMDRTPVSTNEKRR.

It belongs to the IQD family. Binds to multiple calmodulin (CaM) in the presence of Ca(2+) and CaM-like proteins. As to expression, expressed in vessels of roots, cotyledons and leaves, as well as in trichomes.

Its subcellular location is the cell membrane. It is found in the cytoplasm. It localises to the cytoskeleton. Its function is as follows. May be involved in cooperative interactions with calmodulins or calmodulin-like proteins. Recruits calmodulin proteins to microtubules, thus being a potential scaffold in cellular signaling and trafficking. Regulates the formation of oval xylem secondary cell-wall deposition pits through microtubule-dependent lateral inhibition of Rho GTPase domains, thus confining the area of active ROP domains within the lattice of the cortical microtubules. May associate with nucleic acids and regulate gene expression at the transcriptional or post-transcriptional level. This chain is Protein IQ-DOMAIN 13, found in Arabidopsis thaliana (Mouse-ear cress).